A 466-amino-acid chain; its full sequence is Protein hob1 (466 aa).

A BAR domain is found at 17 to 269 (LRSKFNVGEI…RGDVKDRAEA (253 aa)). Coiled-coil stretches lie at residues 31-67 (IYEDAGRRFKSLETEAKKLAEDAKKYTDAINGLLNHQ) and 177-204 (EKKLYEAETAFEQSSQEYEYYNEMLKEE). The interval 280 to 342 (PTYKRPGMGP…ASDYSTPSAG (63 aa)) is disordered. A compositionally biased stretch (low complexity) spans 294 to 303 (ATASSSSSFS). Ser-298, Ser-299, Ser-301, and Ser-303 each carry phosphoserine. Positions 407 to 466 (PAAEHVVALYDYAAQAAGDLSFHAGDRIEVVSRTDNQNEWWIGRLNGAQGQFPGNYVQLE) constitute an SH3 domain.

Has a role in DNA damage signaling as a part of stress response processes. The polypeptide is Protein hob1 (hob1) (Schizosaccharomyces pombe (strain 972 / ATCC 24843) (Fission yeast)).